The sequence spans 642 residues: Transmembrane 9 superfamily member 4 (642 aa).

An N-terminal signal peptide occupies residues 1-23 (MATAMDWLPWSLLLFSLMCETSA). Residues 24–281 (FYVPGVAPIN…TMSDVQIHWF (258 aa)) lie on the Extracellular side of the membrane. Residues 282 to 302 (SIINSVVVVFFLSGILSMIII) traverse the membrane as a helical segment. Residues 303-346 (RTLRKDIANYNKEDDIEDTMEESGWKLVHGDVFRPPQYPMILSS) lie on the Cytoplasmic side of the membrane. Y312 bears the Phosphotyrosine mark. Residues 347 to 367 (LLGSGIQLFCMILIVIFVAML) form a helical membrane-spanning segment. Residues 368-376 (GMLSPSSRG) lie on the Extracellular side of the membrane. A helical membrane pass occupies residues 377-397 (ALMTTACFLFMFMGVFGGFSA). The Cytoplasmic portion of the chain corresponds to 398 to 416 (GRLYRTLKGHRWKKGAFCT). The helical transmembrane segment at 417–437 (ATLYPGVVFGICFVLNCFIWG) threads the bilayer. The Extracellular portion of the chain corresponds to 438 to 449 (KHSSGAVPFPTM). Residues 450–470 (VALLCMWFGISLPLVYLGYYF) form a helical membrane-spanning segment. The Cytoplasmic portion of the chain corresponds to 471 to 501 (GFRKQPYDNPVRTNQIPRQIPEQRWYMNRFV). Residues 502 to 522 (GILMAGILPFGAMFIELFFIF) form a helical membrane-spanning segment. At 523–535 (SAIWENQFYYLFG) the chain is on the extracellular side. Residues 536–556 (FLFLVFIILVVSCSQISIVMV) form a helical membrane-spanning segment. Topologically, residues 557–570 (YFQLCAEDYRWWWR) are cytoplasmic. Residues 571 to 591 (NFLVSGGSAFYVLVYAIFYFV) form a helical membrane-spanning segment. The Extracellular segment spans residues 592 to 598 (NKLDIVE). A helical transmembrane segment spans residues 599 to 619 (FIPSLLYFGYTALMVLSFWLL). Residues 620–642 (TGTIGFYAAYMFVRKIYAAVKID) are Cytoplasmic-facing.

Belongs to the nonaspanin (TM9SF) (TC 9.A.2) family. As to quaternary structure, interacts with ATP6V1H in colon cancer cells. As to expression, highly expressed in metastatic melanoma cells whereas it is undetectable in primary melanoma cells, healthy skin tissues and peripheral blood lymphocytes. Expressed in CD34(+) hematopoietic progenitor cells and during monocyte and granulocyte differentiation. Overexpressed in acute myeloid leukemia, in particular in those displaying granulocytic differentiation (at protein level).

It localises to the membrane. The protein resides in the golgi apparatus. Its subcellular location is the early endosome. Associates with proteins harboring glycine-rich transmembrane domains and ensures their efficient localization to the cell surface. Regulates the assembly and activity of V-ATPase in colon cancer cells via its interaction with V-type proton ATPase subunit H (ATP6V1H) and contributes to V-ATPase-mediated pH alterations in cancer cells which play an important role in drug resistance and invasiveness of colon cancer cells. Plays an important role in an atypical phagocytic activity of metastatic melanoma cells called cannibalism and is involved in the pH regulation of the intracellular vesicles in tumor cells. The sequence is that of Transmembrane 9 superfamily member 4 (TM9SF4) from Homo sapiens (Human).